Consider the following 402-residue polypeptide: Mannonate dehydratase 1 (402 aa).

It belongs to the mannonate dehydratase family. Requires Fe(2+) as cofactor. Mn(2+) serves as cofactor.

It catalyses the reaction D-mannonate = 2-dehydro-3-deoxy-D-gluconate + H2O. It functions in the pathway carbohydrate metabolism; pentose and glucuronate interconversion. Its function is as follows. Catalyzes the dehydration of D-mannonate. The polypeptide is Mannonate dehydratase 1 (uxuA1) (Agrobacterium fabrum (strain C58 / ATCC 33970) (Agrobacterium tumefaciens (strain C58))).